Here is a 321-residue protein sequence, read N- to C-terminus: tRNA U34 carboxymethyltransferase (321 aa).

Carboxy-S-adenosyl-L-methionine is bound by residues Lys-90, Trp-104, Lys-109, Gly-129, 151–153, 180–181, Met-195, Tyr-199, and Arg-314; these read DPT and IE.

Belongs to the class I-like SAM-binding methyltransferase superfamily. CmoB family. As to quaternary structure, homotetramer.

The enzyme catalyses carboxy-S-adenosyl-L-methionine + 5-hydroxyuridine(34) in tRNA = 5-carboxymethoxyuridine(34) in tRNA + S-adenosyl-L-homocysteine + H(+). Catalyzes carboxymethyl transfer from carboxy-S-adenosyl-L-methionine (Cx-SAM) to 5-hydroxyuridine (ho5U) to form 5-carboxymethoxyuridine (cmo5U) at position 34 in tRNAs. This Actinobacillus succinogenes (strain ATCC 55618 / DSM 22257 / CCUG 43843 / 130Z) protein is tRNA U34 carboxymethyltransferase.